Reading from the N-terminus, the 336-residue chain is Dihydroorotate dehydrogenase (quinone) (336 aa).

FMN contacts are provided by residues 62–66 and T86; that span reads AGLDK. Residue K66 participates in substrate binding. Residue 111–115 coordinates substrate; it reads NRMGF. Residues N139 and N172 each coordinate FMN. N172 is a binding site for substrate. Catalysis depends on S175, which acts as the Nucleophile. N177 contacts substrate. Residues K217 and T245 each coordinate FMN. 246–247 lines the substrate pocket; sequence NT. FMN is bound by residues G268, G297, and 318-319; that span reads YT.

It belongs to the dihydroorotate dehydrogenase family. Type 2 subfamily. In terms of assembly, monomer. Requires FMN as cofactor.

It localises to the cell membrane. The catalysed reaction is (S)-dihydroorotate + a quinone = orotate + a quinol. The protein operates within pyrimidine metabolism; UMP biosynthesis via de novo pathway; orotate from (S)-dihydroorotate (quinone route): step 1/1. Functionally, catalyzes the conversion of dihydroorotate to orotate with quinone as electron acceptor. The polypeptide is Dihydroorotate dehydrogenase (quinone) (Vibrio parahaemolyticus serotype O3:K6 (strain RIMD 2210633)).